A 365-amino-acid polypeptide reads, in one-letter code: Terpene cyclase DEP1 (365 aa).

Transmembrane regions (helical) follow at residues 10–30, 82–102, 116–136, 158–178, 188–208, 233–253, 297–317, and 338–358; these read LYLS…NGMF, LLFF…LIES, AWAM…IYLY, LPII…PAWF, ALIA…VGIT, LILA…GALF, LFSQ…AQLL, and MIYL…SFAL.

This sequence belongs to the membrane-bound ascI terpene cyclase family.

Its subcellular location is the membrane. It functions in the pathway polyketide biosynthesis. In terms of biological role, part of the gene cluster that mediates the biosynthesis of depudecin, a highly oxidized eleven-carbon linear polyketide that acts as a histone deacetylase (HDAC) inhibitor and makes a small contribution to pathogenesis. The reducing polyketide synthase DEP5 is the central enzyme in depudecin biosynthesis by yielding the backbone polyketide chain. The monooxygenases DEP2 and DEP4, as well as the uncharacterized protein DEP1, then act as tailoring enzymes to modify the intermediate polyketide chain into depudecin. The chain is Terpene cyclase DEP1 from Fusarium langsethiae.